The primary structure comprises 349 residues: Anthranilate phosphoribosyltransferase (349 aa).

Residues G82, 85–86 (GD), 92–95 (NVST), 110–118 (KHGNRAVSG), and S122 contribute to the 5-phospho-alpha-D-ribose 1-diphosphate site. G82 serves as a coordination point for anthranilate. S94 is a binding site for Mg(2+). N113 is an anthranilate binding site. R168 serves as a coordination point for anthranilate. D227 and E228 together coordinate Mg(2+).

Belongs to the anthranilate phosphoribosyltransferase family. As to quaternary structure, homodimer. Requires Mg(2+) as cofactor.

The catalysed reaction is N-(5-phospho-beta-D-ribosyl)anthranilate + diphosphate = 5-phospho-alpha-D-ribose 1-diphosphate + anthranilate. The protein operates within amino-acid biosynthesis; L-tryptophan biosynthesis; L-tryptophan from chorismate: step 2/5. Catalyzes the transfer of the phosphoribosyl group of 5-phosphorylribose-1-pyrophosphate (PRPP) to anthranilate to yield N-(5'-phosphoribosyl)-anthranilate (PRA). This Pseudomonas putida (Arthrobacter siderocapsulatus) protein is Anthranilate phosphoribosyltransferase.